Consider the following 932-residue polypeptide: 2-oxoglutarate dehydrogenase E1 component (932 aa).

The protein belongs to the alpha-ketoglutarate dehydrogenase family. In terms of assembly, homodimer. Part of the 2-oxoglutarate dehydrogenase (OGDH) complex composed of E1 (2-oxoglutarate dehydrogenase), E2 (dihydrolipoamide succinyltransferase) and E3 (dihydrolipoamide dehydrogenase); the complex contains multiple copies of the three enzymatic components (E1, E2 and E3). Thiamine diphosphate is required as a cofactor.

It catalyses the reaction N(6)-[(R)-lipoyl]-L-lysyl-[protein] + 2-oxoglutarate + H(+) = N(6)-[(R)-S(8)-succinyldihydrolipoyl]-L-lysyl-[protein] + CO2. In terms of biological role, E1 component of the 2-oxoglutarate dehydrogenase (OGDH) complex which catalyzes the decarboxylation of 2-oxoglutarate, the first step in the conversion of 2-oxoglutarate to succinyl-CoA and CO(2). The sequence is that of 2-oxoglutarate dehydrogenase E1 component from Staphylococcus aureus (strain MW2).